A 342-amino-acid chain; its full sequence is MLKNQDLDIERKQEHIEINLTKNIESTLKSGFESIQFIHNALPEINYDNIDTTTTFLGKALQAPILISSMTGGTARARDINYRLAEAAQKAGIAMGLGSMRVLLAAADTIKTFAVRHIAPDILLLANIGAVQLNYGVTPKECQYLVDATKADALILHLNVLQELTQPEGNRNWANLLPKIREVINYLSVPVIVKEVGYGLSKQVAKSLIDVGVKTLDIAGSGGTSWSQVEAYRAKNSLQNRIASSFINWGIPTLDSLKMVREISKNVSIIASGGLKSGIDGAKAIRMGANIFGLAGQLLKAVDNSEYLVSEEIQLIIKQLKITMLCTGSRTLKDLTKAEIKL.

Arginine 11–lysine 12 is a substrate binding site. FMN contacts are provided by residues serine 68, serine 69 to threonine 71, serine 99, and asparagine 127. Serine 99 to arginine 101 contacts substrate. Glutamine 162 lines the substrate pocket. A Mg(2+)-binding site is contributed by glutamate 163. FMN contacts are provided by residues lysine 194, threonine 224, glycine 274–lysine 276, and alanine 295–glycine 296.

It belongs to the IPP isomerase type 2 family. As to quaternary structure, homooctamer. Dimer of tetramers. Requires FMN as cofactor. NADPH is required as a cofactor. Mg(2+) serves as cofactor.

The protein localises to the cytoplasm. The enzyme catalyses isopentenyl diphosphate = dimethylallyl diphosphate. Involved in the biosynthesis of isoprenoids. Catalyzes the 1,3-allylic rearrangement of the homoallylic substrate isopentenyl (IPP) to its allylic isomer, dimethylallyl diphosphate (DMAPP). The polypeptide is Isopentenyl-diphosphate delta-isomerase (Rickettsia canadensis (strain McKiel)).